The following is a 155-amino-acid chain: Small ribosomal subunit protein uS7 (155 aa).

Belongs to the universal ribosomal protein uS7 family. Part of the 30S ribosomal subunit. Contacts proteins S9 and S11.

In terms of biological role, one of the primary rRNA binding proteins, it binds directly to 16S rRNA where it nucleates assembly of the head domain of the 30S subunit. Is located at the subunit interface close to the decoding center, probably blocks exit of the E-site tRNA. The sequence is that of Small ribosomal subunit protein uS7 from Thermotoga petrophila (strain ATCC BAA-488 / DSM 13995 / JCM 10881 / RKU-1).